We begin with the raw amino-acid sequence, 293 residues long: Ribosomal protein L11 methyltransferase (293 aa).

The S-adenosyl-L-methionine site is built by threonine 145, glycine 166, aspartate 188, and asparagine 230.

It belongs to the methyltransferase superfamily. PrmA family.

Its subcellular location is the cytoplasm. The enzyme catalyses L-lysyl-[protein] + 3 S-adenosyl-L-methionine = N(6),N(6),N(6)-trimethyl-L-lysyl-[protein] + 3 S-adenosyl-L-homocysteine + 3 H(+). Methylates ribosomal protein L11. This Salmonella agona (strain SL483) protein is Ribosomal protein L11 methyltransferase.